The sequence spans 453 residues: Bifunctional protein GlmU (453 aa).

A pyrophosphorylase region spans residues 1–225; the sequence is MNIVILAAGT…EWETLGVNSK (225 aa). UDP-N-acetyl-alpha-D-glucosamine is bound by residues 6-9, K20, Q71, 76-77, 98-100, G135, E150, N165, and N223; these read LAAG, GT, and YGD. Residue D100 participates in Mg(2+) binding. Position 223 (N223) interacts with Mg(2+). A linker region spans residues 226-246; it reads AQLAELERIHQRNLADALLAA. An N-acetyltransferase region spans residues 247–453; sequence GVTLADPARI…GYVRPVKKKS (207 aa). 2 residues coordinate UDP-N-acetyl-alpha-D-glucosamine: R329 and K347. The Proton acceptor role is filled by H359. Y362 and N373 together coordinate UDP-N-acetyl-alpha-D-glucosamine. Acetyl-CoA contacts are provided by residues A376, 382 to 383, S401, and A419; that span reads NY.

It in the N-terminal section; belongs to the N-acetylglucosamine-1-phosphate uridyltransferase family. This sequence in the C-terminal section; belongs to the transferase hexapeptide repeat family. In terms of assembly, homotrimer. It depends on Mg(2+) as a cofactor.

The protein resides in the cytoplasm. It catalyses the reaction alpha-D-glucosamine 1-phosphate + acetyl-CoA = N-acetyl-alpha-D-glucosamine 1-phosphate + CoA + H(+). The catalysed reaction is N-acetyl-alpha-D-glucosamine 1-phosphate + UTP + H(+) = UDP-N-acetyl-alpha-D-glucosamine + diphosphate. It participates in nucleotide-sugar biosynthesis; UDP-N-acetyl-alpha-D-glucosamine biosynthesis; N-acetyl-alpha-D-glucosamine 1-phosphate from alpha-D-glucosamine 6-phosphate (route II): step 2/2. Its pathway is nucleotide-sugar biosynthesis; UDP-N-acetyl-alpha-D-glucosamine biosynthesis; UDP-N-acetyl-alpha-D-glucosamine from N-acetyl-alpha-D-glucosamine 1-phosphate: step 1/1. It functions in the pathway bacterial outer membrane biogenesis; LPS lipid A biosynthesis. Its function is as follows. Catalyzes the last two sequential reactions in the de novo biosynthetic pathway for UDP-N-acetylglucosamine (UDP-GlcNAc). The C-terminal domain catalyzes the transfer of acetyl group from acetyl coenzyme A to glucosamine-1-phosphate (GlcN-1-P) to produce N-acetylglucosamine-1-phosphate (GlcNAc-1-P), which is converted into UDP-GlcNAc by the transfer of uridine 5-monophosphate (from uridine 5-triphosphate), a reaction catalyzed by the N-terminal domain. The protein is Bifunctional protein GlmU of Burkholderia mallei (strain NCTC 10247).